The sequence spans 530 residues: MYLVTAAEMGQLDRLASSEYMIPSIVLMENAGLRVVESIERHFQGQVANRRILIFCGKGNNGGDGLVVARHLLNRGAEVKVFLLARPEDIRGDARTNLEIYQKMGGKLLLLLGESHLQRADIALLYADLVVDAIFGTGFKGAAMGLPAAVINMINKAHRETVAVDLPSGLEADTGRCFGPCIQATWTVTFALPKLGLVVEPGASLTGRLEVADIGIPQKLVATQHFNRRLLTAAWCRSQLPRREASGHKGLYGRVLAVGGSPGLTGAITLAATAALKAGAGLVTAAVPRGVQGILAMKTTEIMTMSLPETPAGALSRDALDPLLERLAEVDVLAIGPGLSRDPATVDLVKELLPRVQVPAVVDADALNALATDTRVLTGDHGPLVLTPHPGEMARLLGTTAAKIQEDRLEIAAKYAREWQAVLLLKGARTVIAWPDGQVYINPTGNPGMATAGSGDVLTGIIAGLAGQGLKPGVAAALGAYLHGAAGDEAARQRGQRAMMAGDLLDFLPYVLRNLEEEVETIVAAGLGRD.

The NAD(P)H-hydrate epimerase stretch occupies residues 1 to 224; it reads MYLVTAAEMG…GIPQKLVATQ (224 aa). The YjeF N-terminal domain occupies 9-222; the sequence is MGQLDRLASS…DIGIPQKLVA (214 aa). An NADPHX 1; for epimerase activity region spans residues 60 to 64; it reads NNGGD. K(+)-binding residues include asparagine 61 and aspartate 132. Positions 136 to 142 are NADPHX 1; for epimerase activity; the sequence is GTGFKGA. Aspartate 165 is a binding site for (6S)-NADPHX. Serine 168 serves as a coordination point for K(+). The YjeF C-terminal domain maps to 232-515; the sequence is TAAWCRSQLP…DFLPYVLRNL (284 aa). Positions 232–530 are ADP-dependent (S)-NAD(P)H-hydrate dehydratase; the sequence is TAAWCRSQLP…TIVAAGLGRD (299 aa). Residue glycine 338 coordinates (6S)-NADPHX. Residues 389–395 form an NADPHX 2; for dehydratase activity region; sequence HPGEMAR. Residues 426–430 and 446–455 contribute to the ADP site; these read KGART and NPGMATAGSG. Aspartate 456 is a (6S)-NADPHX binding site.

It in the N-terminal section; belongs to the NnrE/AIBP family. This sequence in the C-terminal section; belongs to the NnrD/CARKD family. K(+) serves as cofactor.

The enzyme catalyses (6S)-NADHX + ADP = AMP + phosphate + NADH + H(+). It carries out the reaction (6S)-NADPHX + ADP = AMP + phosphate + NADPH + H(+). The catalysed reaction is (6R)-NADHX = (6S)-NADHX. It catalyses the reaction (6R)-NADPHX = (6S)-NADPHX. Its function is as follows. Bifunctional enzyme that catalyzes the epimerization of the S- and R-forms of NAD(P)HX and the dehydration of the S-form of NAD(P)HX at the expense of ADP, which is converted to AMP. This allows the repair of both epimers of NAD(P)HX, a damaged form of NAD(P)H that is a result of enzymatic or heat-dependent hydration. This Moorella thermoacetica (strain ATCC 39073 / JCM 9320) protein is Bifunctional NAD(P)H-hydrate repair enzyme Nnr (nnr).